The following is a 142-amino-acid chain: Large ribosomal subunit protein uL13 (142 aa).

This sequence belongs to the universal ribosomal protein uL13 family. Part of the 50S ribosomal subunit.

Its function is as follows. This protein is one of the early assembly proteins of the 50S ribosomal subunit, although it is not seen to bind rRNA by itself. It is important during the early stages of 50S assembly. The polypeptide is Large ribosomal subunit protein uL13 (Agathobacter rectalis (strain ATCC 33656 / DSM 3377 / JCM 17463 / KCTC 5835 / VPI 0990) (Eubacterium rectale)).